Consider the following 184-residue polypeptide: Ribosome maturation factor RimM (184 aa).

Residues 101 to 180 (DGEFFYCDLV…KITTNNAKTL (80 aa)) form the PRC barrel domain.

The protein belongs to the RimM family. Binds ribosomal protein uS19.

The protein localises to the cytoplasm. An accessory protein needed during the final step in the assembly of 30S ribosomal subunit, possibly for assembly of the head region. Essential for efficient processing of 16S rRNA. May be needed both before and after RbfA during the maturation of 16S rRNA. It has affinity for free ribosomal 30S subunits but not for 70S ribosomes. The chain is Ribosome maturation factor RimM from Helicobacter pylori (strain Shi470).